A 392-amino-acid polypeptide reads, in one-letter code: Formate-dependent phosphoribosylglycinamide formyltransferase (392 aa).

N(1)-(5-phospho-beta-D-ribosyl)glycinamide-binding positions include 22-23 (EL) and Glu82. ATP is bound by residues Arg114, Lys155, 160 to 165 (SSGKGQ), 195 to 198 (EGVV), and Glu203. Residues 119 to 308 (RLAAEELQLP…EFALHVRAFL (190 aa)) enclose the ATP-grasp domain. Glu267 and Glu279 together coordinate Mg(2+). N(1)-(5-phospho-beta-D-ribosyl)glycinamide contacts are provided by residues Asp286, Lys355, and 362-363 (RR).

It belongs to the PurK/PurT family. As to quaternary structure, homodimer.

The catalysed reaction is N(1)-(5-phospho-beta-D-ribosyl)glycinamide + formate + ATP = N(2)-formyl-N(1)-(5-phospho-beta-D-ribosyl)glycinamide + ADP + phosphate + H(+). Its pathway is purine metabolism; IMP biosynthesis via de novo pathway; N(2)-formyl-N(1)-(5-phospho-D-ribosyl)glycinamide from N(1)-(5-phospho-D-ribosyl)glycinamide (formate route): step 1/1. In terms of biological role, involved in the de novo purine biosynthesis. Catalyzes the transfer of formate to 5-phospho-ribosyl-glycinamide (GAR), producing 5-phospho-ribosyl-N-formylglycinamide (FGAR). Formate is provided by PurU via hydrolysis of 10-formyl-tetrahydrofolate. This chain is Formate-dependent phosphoribosylglycinamide formyltransferase, found in Shigella sonnei (strain Ss046).